The sequence spans 486 residues: Nucleolar GTP-binding protein 2 (486 aa).

The tract at residues 1 to 20 (MGTGKKEKSRRIREGDTKDG) is disordered. A phosphoserine mark is found at Ser60, Ser85, and Ser155. The 162-residue stretch at 212-373 (WNELYKVIDS…LIDCPGIVPP (162 aa)) folds into the CP-type G domain. GTP is bound by residues 322-329 (GYPNTGKS) and 366-370 (DCPGI).

It belongs to the TRAFAC class YlqF/YawG GTPase family. NOG2 subfamily.

The protein resides in the nucleus. It localises to the nucleolus. In terms of biological role, GTPase that associates with pre-60S ribosomal subunits in the nucleolus and is required for their nuclear export and maturation. The polypeptide is Nucleolar GTP-binding protein 2 (NOG2) (Saccharomyces cerevisiae (strain ATCC 204508 / S288c) (Baker's yeast)).